Reading from the N-terminus, the 450-residue chain is tRNA modification GTPase MnmE (450 aa).

(6S)-5-formyl-5,6,7,8-tetrahydrofolate contacts are provided by Arg25, Glu86, and Arg126. Positions 221–373 (GLRVALVGRP…LVQALLERCG (153 aa)) constitute a TrmE-type G domain. Asn231 contacts K(+). Residues 231-236 (NVGKSS), 250-256 (TELPGTT), 275-278 (DTAG), and 336-339 (NKAD) contribute to the GTP site. Mg(2+) is bound at residue Ser235. K(+) is bound by residues Thr250, Leu252, and Thr255. Thr256 is a binding site for Mg(2+). Residue Lys450 participates in (6S)-5-formyl-5,6,7,8-tetrahydrofolate binding.

It belongs to the TRAFAC class TrmE-Era-EngA-EngB-Septin-like GTPase superfamily. TrmE GTPase family. As to quaternary structure, homodimer. Heterotetramer of two MnmE and two MnmG subunits. It depends on K(+) as a cofactor.

The protein localises to the cytoplasm. Exhibits a very high intrinsic GTPase hydrolysis rate. Involved in the addition of a carboxymethylaminomethyl (cmnm) group at the wobble position (U34) of certain tRNAs, forming tRNA-cmnm(5)s(2)U34. This Parasynechococcus marenigrum (strain WH8102) protein is tRNA modification GTPase MnmE.